Consider the following 204-residue polypeptide: Peptidyl-tRNA hydrolase (204 aa).

Tyr14 contributes to the tRNA binding site. His19 acts as the Proton acceptor in catalysis. TRNA is bound by residues Tyr64, Asn66, and Asn112.

It belongs to the PTH family. As to quaternary structure, monomer.

The protein resides in the cytoplasm. The enzyme catalyses an N-acyl-L-alpha-aminoacyl-tRNA + H2O = an N-acyl-L-amino acid + a tRNA + H(+). Hydrolyzes ribosome-free peptidyl-tRNAs (with 1 or more amino acids incorporated), which drop off the ribosome during protein synthesis, or as a result of ribosome stalling. Its function is as follows. Catalyzes the release of premature peptidyl moieties from peptidyl-tRNA molecules trapped in stalled 50S ribosomal subunits, and thus maintains levels of free tRNAs and 50S ribosomes. In Nitrobacter hamburgensis (strain DSM 10229 / NCIMB 13809 / X14), this protein is Peptidyl-tRNA hydrolase.